Consider the following 134-residue polypeptide: Syncollin (134 aa).

The signal sequence occupies residues 1–21; it reads MSPLCLLLLALALVAVPGARG.

As to quaternary structure, monomer and homooligomer; most probably hexameric. Interacts with GP2. According to PubMed:10753942 interaction with syntaxins shown in PubMed:9244306 is physiologically questionable. Post-translationally, contains intrachain disulfide bonds. In terms of tissue distribution, specifically expressed in pancreas and also detected in secretory granules of parotid gland (at protein level). Expressed in pancreas, spleen, small intestine, lung and neutrophilic granulocytes (at protein level). Expressed by epithelial cells in duodenum and colon.

The protein resides in the zymogen granule membrane. It is found in the zymogen granule lumen. Functionally, functions in exocytosis in pancreatic acinar cells regulating the fusion of zymogen granules with each other. May have a pore-forming activity on membranes and regulate exocytosis in other exocrine tissues. This is Syncollin (Sycn) from Rattus norvegicus (Rat).